A 62-amino-acid chain; its full sequence is Large ribosomal subunit protein uL29 (62 aa).

The protein belongs to the universal ribosomal protein uL29 family.

This is Large ribosomal subunit protein uL29 from Cytophaga hutchinsonii (strain ATCC 33406 / DSM 1761 / CIP 103989 / NBRC 15051 / NCIMB 9469 / D465).